Here is a 394-residue protein sequence, read N- to C-terminus: S-adenosylmethionine synthase (394 aa).

Residue His-18 coordinates ATP. Asp-20 contributes to the Mg(2+) binding site. Glu-46 is a K(+) binding site. The L-methionine site is built by Glu-59 and Gln-104. The tract at residues 104-114 (QSPDIAQGVDA) is flexible loop. ATP is bound by residues 174 to 176 (DCK), 240 to 241 (KF), Asp-249, 255 to 256 (RK), Ala-272, and Lys-276. Asp-249 provides a ligand contact to L-methionine. Residue Lys-280 coordinates L-methionine.

The protein belongs to the AdoMet synthase family. Homotetramer; dimer of dimers. Mg(2+) serves as cofactor. It depends on K(+) as a cofactor.

Its subcellular location is the cytoplasm. The enzyme catalyses L-methionine + ATP + H2O = S-adenosyl-L-methionine + phosphate + diphosphate. The protein operates within amino-acid biosynthesis; S-adenosyl-L-methionine biosynthesis; S-adenosyl-L-methionine from L-methionine: step 1/1. Its function is as follows. Catalyzes the formation of S-adenosylmethionine (AdoMet) from methionine and ATP. The overall synthetic reaction is composed of two sequential steps, AdoMet formation and the subsequent tripolyphosphate hydrolysis which occurs prior to release of AdoMet from the enzyme. This Akkermansia muciniphila (strain ATCC BAA-835 / DSM 22959 / JCM 33894 / BCRC 81048 / CCUG 64013 / CIP 107961 / Muc) protein is S-adenosylmethionine synthase.